A 46-amino-acid chain; its full sequence is Protein PsbN (46 aa).

A helical transmembrane segment spans residues 7-27; the sequence is ALSVALGVMAVVLGLTGFGVY.

This sequence belongs to the PsbN family.

It is found in the cellular thylakoid membrane. Functionally, may play a role in photosystem I and II biogenesis. This chain is Protein PsbN, found in Synechococcus sp. (strain CC9902).